A 283-amino-acid chain; its full sequence is Ribosomal RNA small subunit methyltransferase A (283 aa).

N22, L24, G49, E70, and N113 together coordinate S-adenosyl-L-methionine.

The protein belongs to the class I-like SAM-binding methyltransferase superfamily. rRNA adenine N(6)-methyltransferase family. RsmA subfamily.

The protein resides in the cytoplasm. The enzyme catalyses adenosine(1518)/adenosine(1519) in 16S rRNA + 4 S-adenosyl-L-methionine = N(6)-dimethyladenosine(1518)/N(6)-dimethyladenosine(1519) in 16S rRNA + 4 S-adenosyl-L-homocysteine + 4 H(+). In terms of biological role, specifically dimethylates two adjacent adenosines (A1518 and A1519) in the loop of a conserved hairpin near the 3'-end of 16S rRNA in the 30S particle. May play a critical role in biogenesis of 30S subunits. This chain is Ribosomal RNA small subunit methyltransferase A, found in Myxococcus xanthus (strain DK1622).